We begin with the raw amino-acid sequence, 256 residues long: GTP cyclohydrolase FolE2 (256 aa).

Belongs to the GTP cyclohydrolase IV family.

The enzyme catalyses GTP + H2O = 7,8-dihydroneopterin 3'-triphosphate + formate + H(+). It functions in the pathway cofactor biosynthesis; 7,8-dihydroneopterin triphosphate biosynthesis; 7,8-dihydroneopterin triphosphate from GTP: step 1/1. In terms of biological role, converts GTP to 7,8-dihydroneopterin triphosphate. In Caldicellulosiruptor bescii (strain ATCC BAA-1888 / DSM 6725 / KCTC 15123 / Z-1320) (Anaerocellum thermophilum), this protein is GTP cyclohydrolase FolE2.